Here is a 185-residue protein sequence, read N- to C-terminus: Ribosome-recycling factor (185 aa).

The protein belongs to the RRF family.

It is found in the cytoplasm. In terms of biological role, responsible for the release of ribosomes from messenger RNA at the termination of protein biosynthesis. May increase the efficiency of translation by recycling ribosomes from one round of translation to another. The polypeptide is Ribosome-recycling factor (Aliarcobacter butzleri (strain RM4018) (Arcobacter butzleri)).